A 247-amino-acid chain; its full sequence is tRNA uridine(34) hydroxylase (247 aa).

In terms of domain architecture, Rhodanese spans 123–217 (ITKQDVIVDT…YLEDTQNKNN (95 aa)). Residue Cys-177 is the Cysteine persulfide intermediate of the active site.

It belongs to the TrhO family.

It carries out the reaction uridine(34) in tRNA + AH2 + O2 = 5-hydroxyuridine(34) in tRNA + A + H2O. Functionally, catalyzes oxygen-dependent 5-hydroxyuridine (ho5U) modification at position 34 in tRNAs. This is tRNA uridine(34) hydroxylase from Rickettsia bellii (strain RML369-C).